Reading from the N-terminus, the 265-residue chain is Indole-3-glycerol phosphate synthase (265 aa).

Belongs to the TrpC family.

It catalyses the reaction 1-(2-carboxyphenylamino)-1-deoxy-D-ribulose 5-phosphate + H(+) = (1S,2R)-1-C-(indol-3-yl)glycerol 3-phosphate + CO2 + H2O. It functions in the pathway amino-acid biosynthesis; L-tryptophan biosynthesis; L-tryptophan from chorismate: step 4/5. The chain is Indole-3-glycerol phosphate synthase from Xanthomonas oryzae pv. oryzae (strain PXO99A).